A 361-amino-acid chain; its full sequence is Homeobox protein knotted-1-like 6 (361 aa).

Residues 11 to 48 (VGASGVHGGHQHQHHHHPWGSSLSAIVAPPPPPQLQQQ) are disordered. Residues 19–28 (GHQHQHHHHP) are compositionally biased toward basic residues. The 21-residue stretch at 242-262 (ELKHHLLKKYSGYLSSLKQEL) folds into the ELK domain. A DNA-binding region (homeobox; TALE-type) is located at residues 263–326 (SKKKKKGKLP…NQRKRHWKPS (64 aa)).

It belongs to the TALE/KNOX homeobox family. As to quaternary structure, interacts with FTIP7. In terms of tissue distribution, expressed predominantly in shoot apices. Also found to a lesser extent in glumes.

It localises to the nucleus. The protein localises to the cytoplasm. Its function is as follows. Transcription factor that regulates genes involved in development. May be involved in shoot formation during embryogenesis. Overexpression in transgenic plants causes altered leaf morphology. Regulates anther dehiscence via direct repression of the auxin biosynthetic gene YUCCA4. Binds to the DNA sequence 5'-TGAC-3' in the promoter of the YUCCA4 gene and represses its activity during anther development. Reduction of auxin levels at late stage of anther development, after meiosis of microspore mother cells, is necessary for normal anther dehiscence and seed setting. This Oryza sativa subsp. japonica (Rice) protein is Homeobox protein knotted-1-like 6 (OSH1).